We begin with the raw amino-acid sequence, 208 residues long: ATP-dependent dethiobiotin synthetase BioD (208 aa).

Residue 11–16 (EVGKTF) coordinates ATP. Residue T15 participates in Mg(2+) binding. K31 is a catalytic residue. S35 provides a ligand contact to substrate. ATP is bound by residues D42, 95-98 (ETSG), and 155-156 (NQ). Residues D42 and E95 each contribute to the Mg(2+) site.

The protein belongs to the dethiobiotin synthetase family. Homodimer. Mg(2+) serves as cofactor.

The protein localises to the cytoplasm. The enzyme catalyses (7R,8S)-7,8-diammoniononanoate + CO2 + ATP = (4R,5S)-dethiobiotin + ADP + phosphate + 3 H(+). The protein operates within cofactor biosynthesis; biotin biosynthesis; biotin from 7,8-diaminononanoate: step 1/2. Functionally, catalyzes a mechanistically unusual reaction, the ATP-dependent insertion of CO2 between the N7 and N8 nitrogen atoms of 7,8-diaminopelargonic acid (DAPA, also called 7,8-diammoniononanoate) to form a ureido ring. The chain is ATP-dependent dethiobiotin synthetase BioD from Chlamydia felis (strain Fe/C-56) (Chlamydophila felis).